Consider the following 352-residue polypeptide: ATPase GET3 (352 aa).

Position 26–33 (26–33 (KGGVGKTT)) interacts with ATP. Residue Asp-57 is part of the active site. ATP contacts are provided by Glu-243 and Asn-270. Residues Cys-283 and Cys-286 each coordinate Zn(2+).

This sequence belongs to the arsA ATPase family. Homodimer. Component of the Golgi to ER traffic (GET) complex, which is composed of GET1, GET2 and GET3. Within the complex, GET1 and GET2 form a heterotetramer which is stabilized by phosphatidylinositol binding and which binds to the GET3 homodimer. Interacts with the chloride channel protein GEF1.

The protein resides in the cytoplasm. The protein localises to the endoplasmic reticulum. Its subcellular location is the golgi apparatus. Its function is as follows. ATPase required for the post-translational delivery of tail-anchored (TA) proteins to the endoplasmic reticulum. Recognizes and selectively binds the transmembrane domain of TA proteins in the cytosol. This complex then targets to the endoplasmic reticulum by membrane-bound receptors GET1 and GET2, where the tail-anchored protein is released for insertion. This process is regulated by ATP binding and hydrolysis. ATP binding drives the homodimer towards the closed dimer state, facilitating recognition of newly synthesized TA membrane proteins. ATP hydrolysis is required for insertion. Subsequently, the homodimer reverts towards the open dimer state, lowering its affinity for the GET1-GET2 receptor, and returning it to the cytosol to initiate a new round of targeting. Cooperates with the HDEL receptor ERD2 to mediate the ATP-dependent retrieval of resident ER proteins that contain a C-terminal H-D-E-L retention signal from the Golgi to the ER. Involved in low-level resistance to the oxyanions arsenite and arsenate, and in heat tolerance. This Vanderwaltozyma polyspora (strain ATCC 22028 / DSM 70294 / BCRC 21397 / CBS 2163 / NBRC 10782 / NRRL Y-8283 / UCD 57-17) (Kluyveromyces polysporus) protein is ATPase GET3.